The following is a 217-amino-acid chain: Small ribosomal subunit protein uS3 (217 aa).

In terms of domain architecture, KH type-2 spans 40-110 (IRDLINKGFN…EVYINIHEVR (71 aa)).

The protein belongs to the universal ribosomal protein uS3 family. As to quaternary structure, part of the 30S ribosomal subunit. Forms a tight complex with proteins S10 and S14.

Functionally, binds the lower part of the 30S subunit head. Binds mRNA in the 70S ribosome, positioning it for translation. This Rickettsia akari (strain Hartford) protein is Small ribosomal subunit protein uS3.